A 389-amino-acid polypeptide reads, in one-letter code: 8-amino-7-oxononanoate synthase 2 (389 aa).

Residue Arg21 participates in substrate binding. 108–109 provides a ligand contact to pyridoxal 5'-phosphate; the sequence is GY. His133 is a substrate binding site. Pyridoxal 5'-phosphate-binding positions include Ser180, 205–208, and 234–237; these read DDAH and TLSK. Position 237 is an N6-(pyridoxal phosphate)lysine (Lys237). Thr351 lines the substrate pocket.

This sequence belongs to the class-II pyridoxal-phosphate-dependent aminotransferase family. BioF subfamily. Homodimer. Requires pyridoxal 5'-phosphate as cofactor.

The catalysed reaction is 6-carboxyhexanoyl-[ACP] + L-alanine + H(+) = (8S)-8-amino-7-oxononanoate + holo-[ACP] + CO2. It functions in the pathway cofactor biosynthesis; biotin biosynthesis. In terms of biological role, catalyzes the decarboxylative condensation of pimeloyl-[acyl-carrier protein] and L-alanine to produce 8-amino-7-oxononanoate (AON), [acyl-carrier protein], and carbon dioxide. In Bacillus subtilis (strain 168), this protein is 8-amino-7-oxononanoate synthase 2 (bioF).